The following is a 407-amino-acid chain: Polygalacturonase (407 aa).

The signal sequence occupies residues 1–26 (MAPHLNIVPSMFVLLLLFISASKVQS). 2 PbH1 repeats span residues 180-206 (CKNITLERLKIEAPDESPNTDGIHMGK) and 207-228 (SEGVNIIASDIKTGDDCISIGD). N-linked (GlcNAc...) asparagine glycosylation occurs at Asn-182. The active-site Proton donor is Asp-221. Residues Cys-223 and Cys-240 are joined by a disulfide bond. His-244 is a catalytic residue. PbH1 repeat units follow at residues 260–281 (VEGIKISNCTITNTSNGARIKT) and 290–311 (VSEIHFEDITMNNVSSPILIDQ). N-linked (GlcNAc...) asparagine glycans are attached at residues Asn-267, Asn-272, Asn-302, and Asn-331. Cystine bridges form between Cys-351–Cys-357 and Cys-379–Cys-395. The PbH1 5 repeat unit spans residues 357 to 384 (CQNVELADIDIKHNGAEPATSQCLNVKP).

The protein belongs to the glycosyl hydrolase 28 family. As to expression, pollen.

It is found in the secreted. The protein resides in the cell wall. It catalyses the reaction (1,4-alpha-D-galacturonosyl)n+m + H2O = (1,4-alpha-D-galacturonosyl)n + (1,4-alpha-D-galacturonosyl)m.. In terms of biological role, may function in the depolymerization of the pectin in its walls during pollen tube elongation, or in that of the pistil during pollination. This chain is Polygalacturonase (G9), found in Gossypium hirsutum (Upland cotton).